The chain runs to 417 residues: Voltage-gated ClC-type chloride channel ClcB (417 aa).

A run of 10 helical transmembrane segments spans residues 5 to 25 (LLIA…FRHA), 54 to 74 (LITP…WQKM), 146 to 166 (LWIA…PLAG), 168 to 188 (LFIA…PVVV), 222 to 242 (VMIV…MWLM), 258 to 278 (WQLA…PTVW), 288 to 308 (FLLS…KILA), 316 to 336 (GAPG…GMFL), 349 to 371 (EIAI…HAPI), and 380 to 400 (MTGE…ASVL).

Belongs to the chloride channel (TC 2.A.49) family. ClcB subfamily.

The protein resides in the cell inner membrane. Its function is as follows. Probably acts as an electrical shunt for an outwardly-directed proton pump that is linked to amino acid decarboxylation, as part of the extreme acid resistance (XAR) response. The chain is Voltage-gated ClC-type chloride channel ClcB from Salmonella dublin (strain CT_02021853).